A 779-amino-acid chain; its full sequence is Protocadherin beta-8 (779 aa).

An N-terminal signal peptide occupies residues 1–28 (METALTKTPEKRQVIFLAILLLLWEASS). The Extracellular portion of the chain corresponds to 29-690 (EAISYSMPEE…QEEDMLTLYL (662 aa)). 5 consecutive Cadherin domains span residues 75–133 (LQLD…FPEF), 134–242 (PDTE…APQF), 243–346 (LQSL…APKL), 347–450 (TISS…APAF), and 451–560 (TQTS…APFV). An intrachain disulfide couples cysteine 96 to cysteine 102. Residue asparagine 169 is glycosylated (N-linked (GlcNAc...) asparagine). Serine 223 carries an O-linked (Man) serine glycan. O-linked (Man) threonine glycans are attached at residues threonine 225 and threonine 227. Asparagine 417 is a glycosylation site (N-linked (GlcNAc...) asparagine). Asparagine 566 is a glycosylation site (N-linked (GlcNAc...) asparagine). Positions 575 to 675 (LPRAAEPGYL…SQPYLPLPEV (101 aa)) constitute a Cadherin 6 domain. The helical transmembrane segment at 691-711 (VIALASVSSLFLLSVLLFVGV) threads the bilayer. The Cytoplasmic portion of the chain corresponds to 712-779 (KLCKKAREAS…IIPSSLLQDS (68 aa)).

Forms homodimers in trans (molecules expressed by two different cells). Forms promiscuous heterodimers in cis (at the plasma membrane of the same cell) with other protocadherins.

Its subcellular location is the cell membrane. Functionally, calcium-dependent cell-adhesion protein involved in cells self-recognition and non-self discrimination. Thereby, it is involved in the establishment and maintenance of specific neuronal connections in the brain. The polypeptide is Protocadherin beta-8 (Mus musculus (Mouse)).